The primary structure comprises 472 residues: Glycerol-3-phosphate acyltransferase, chloroplastic (472 aa).

The N-terminal 102 residues, 1 to 102, are a transit peptide targeting the chloroplast; sequence MLVLSSSAPP…EIPVKKEDDN (102 aa). An HXXXXD motif motif is present at residues 241–246; that stretch reads HQSEAD.

Belongs to the GPAT/DAPAT family.

The protein resides in the plastid. Its subcellular location is the chloroplast stroma. The catalysed reaction is sn-glycerol 3-phosphate + an acyl-CoA = a 1-acyl-sn-glycero-3-phosphate + CoA. It functions in the pathway phospholipid metabolism; CDP-diacylglycerol biosynthesis; CDP-diacylglycerol from sn-glycerol 3-phosphate: step 1/3. In terms of biological role, esterifies acyl-group from acyl-ACP to the sn-1 position of glycerol-3-phosphate. The enzyme from chilling-resistant plants discriminates against non-fluid palmitic acid and selects oleic acid whereas the enzyme from sensitive plants accepts both fatty acids. This is an oleate-selective acyltransferase. This chain is Glycerol-3-phosphate acyltransferase, chloroplastic (GAT), found in Spinacia oleracea (Spinach).